Consider the following 369-residue polypeptide: Anhydro-N-acetylmuramic acid kinase (369 aa).

Position 12-19 (12-19 (GTSLDGVD)) interacts with ATP.

It belongs to the anhydro-N-acetylmuramic acid kinase family.

The catalysed reaction is 1,6-anhydro-N-acetyl-beta-muramate + ATP + H2O = N-acetyl-D-muramate 6-phosphate + ADP + H(+). It participates in amino-sugar metabolism; 1,6-anhydro-N-acetylmuramate degradation. It functions in the pathway cell wall biogenesis; peptidoglycan recycling. In terms of biological role, catalyzes the specific phosphorylation of 1,6-anhydro-N-acetylmuramic acid (anhMurNAc) with the simultaneous cleavage of the 1,6-anhydro ring, generating MurNAc-6-P. Is required for the utilization of anhMurNAc either imported from the medium or derived from its own cell wall murein, and thus plays a role in cell wall recycling. In Shigella flexneri, this protein is Anhydro-N-acetylmuramic acid kinase.